Reading from the N-terminus, the 364-residue chain is Probable tartrate dehydrogenase/decarboxylase TtuC (364 aa).

D222, D246, and D250 together coordinate Mn(2+).

It belongs to the isocitrate and isopropylmalate dehydrogenases family. The cofactor is Mg(2+). Mn(2+) is required as a cofactor. Requires K(+) as cofactor.

It is found in the cytoplasm. The catalysed reaction is tartrate + NAD(+) = 2-hydroxy-3-oxosuccinate + NADH + H(+). It catalyses the reaction (2R,3S)-tartrate + NAD(+) = 2-hydroxy-3-oxosuccinate + NADH + H(+). It carries out the reaction (2R,3R)-tartrate + NAD(+) = 2-hydroxy-3-oxosuccinate + NADH + H(+). The enzyme catalyses (2R,3R)-tartrate + H(+) = (R)-glycerate + CO2. The catalysed reaction is (R)-malate + NAD(+) = pyruvate + CO2 + NADH. Its pathway is carbohydrate acid metabolism; tartrate degradation; 2-hydroxy-3-oxosuccinate from L-tartrate: step 1/1. It participates in carbohydrate acid metabolism; tartrate degradation; 2-hydroxy-3-oxosuccinate from meso-tartrate: step 1/1. It functions in the pathway carbohydrate acid metabolism; tartrate degradation; D-glycerate from L-tartrate: step 1/1. Its function is as follows. Has multiple catalytic activities. Apart from catalyzing the oxidation of (+)-tartrate to oxaloglycolate, also converts meso-tartrate to D-glycerate and catalyzes the oxidative decarboxylation of D-malate to pyruvate. The chain is Probable tartrate dehydrogenase/decarboxylase TtuC (ttuC) from Agrobacterium vitis (Rhizobium vitis).